The chain runs to 75 residues: MARFFRRRKFCRFTAEGVQEIDYKDVATLKNYITEAGKIVPSRITGTRAKYQRQLARAIKRSRYLALLPYTDKHL.

This sequence belongs to the bacterial ribosomal protein bS18 family. Part of the 30S ribosomal subunit. Forms a tight heterodimer with protein bS6.

Functionally, binds as a heterodimer with protein bS6 to the central domain of the 16S rRNA, where it helps stabilize the platform of the 30S subunit. The polypeptide is Small ribosomal subunit protein bS18 (Aliivibrio fischeri (strain ATCC 700601 / ES114) (Vibrio fischeri)).